The primary structure comprises 110 residues: Protein RnfH (110 aa).

Residues Val90–Arg110 form a disordered region.

It belongs to the UPF0125 (RnfH) family.

This chain is Protein RnfH, found in Burkholderia mallei (strain NCTC 10229).